A 921-amino-acid polypeptide reads, in one-letter code: Isoleucine--tRNA ligase (921 aa).

The short motif at 57–67 (PYANGDIHMGH) is the 'HIGH' region element. Residue Glu552 coordinates L-isoleucyl-5'-AMP. Residues 593-597 (KMSKS) carry the 'KMSKS' region motif. An ATP-binding site is contributed by Lys596. Zn(2+)-binding residues include Cys888, Cys891, Cys908, and Cys911.

Belongs to the class-I aminoacyl-tRNA synthetase family. IleS type 1 subfamily. In terms of assembly, monomer. The cofactor is Zn(2+).

The protein localises to the cytoplasm. It catalyses the reaction tRNA(Ile) + L-isoleucine + ATP = L-isoleucyl-tRNA(Ile) + AMP + diphosphate. Catalyzes the attachment of isoleucine to tRNA(Ile). As IleRS can inadvertently accommodate and process structurally similar amino acids such as valine, to avoid such errors it has two additional distinct tRNA(Ile)-dependent editing activities. One activity is designated as 'pretransfer' editing and involves the hydrolysis of activated Val-AMP. The other activity is designated 'posttransfer' editing and involves deacylation of mischarged Val-tRNA(Ile). This chain is Isoleucine--tRNA ligase, found in Bacillus cereus (strain B4264).